The following is a 540-amino-acid chain: Membrane protein insertase YidC (540 aa).

The chain crosses the membrane as a helical span at residues 6-26 (NILLIALALVSFLLFQQWQVA). A compositionally biased stretch (low complexity) spans 36–47 (QAQSSSSLPAPS). The segment at 36-63 (QAQSSSSLPAPSFADELDPVPGQQQASA) is disordered. Helical transmembrane passes span 342–362 (AFIQSFVGNWGVAIICLTFIV), 417–437 (LGGCLPLVLQMPIFIALYWAL), 455–475 (LSAQDPYYILPLLMGASMFLI), and 496–516 (PVMFTFFFLFFPSGLVLYWLV).

Belongs to the OXA1/ALB3/YidC family. Type 1 subfamily. As to quaternary structure, interacts with the Sec translocase complex via SecD. Specifically interacts with transmembrane segments of nascent integral membrane proteins during membrane integration.

It localises to the cell inner membrane. Functionally, required for the insertion and/or proper folding and/or complex formation of integral membrane proteins into the membrane. Involved in integration of membrane proteins that insert both dependently and independently of the Sec translocase complex, as well as at least some lipoproteins. Aids folding of multispanning membrane proteins. The sequence is that of Membrane protein insertase YidC from Vibrio parahaemolyticus serotype O3:K6 (strain RIMD 2210633).